The chain runs to 271 residues: Formamidopyrimidine-DNA glycosylase (271 aa).

The active-site Schiff-base intermediate with DNA is the P2. E3 functions as the Proton donor in the catalytic mechanism. Residue K58 is the Proton donor; for beta-elimination activity of the active site. DNA contacts are provided by H90, R108, and R151. The FPG-type; degenerate zinc-finger motif lies at 236–271 (QVYGRDGQPCHRDDGGTIRRFAQGGRSTWYCPRCQR). Residue R261 is the Proton donor; for delta-elimination activity of the active site.

Belongs to the FPG family. Monomer. Zn(2+) is required as a cofactor.

It catalyses the reaction Hydrolysis of DNA containing ring-opened 7-methylguanine residues, releasing 2,6-diamino-4-hydroxy-5-(N-methyl)formamidopyrimidine.. The enzyme catalyses 2'-deoxyribonucleotide-(2'-deoxyribose 5'-phosphate)-2'-deoxyribonucleotide-DNA = a 3'-end 2'-deoxyribonucleotide-(2,3-dehydro-2,3-deoxyribose 5'-phosphate)-DNA + a 5'-end 5'-phospho-2'-deoxyribonucleoside-DNA + H(+). Its function is as follows. Involved in base excision repair of DNA damaged by oxidation or by mutagenic agents. Acts as a DNA glycosylase that recognizes and removes damaged bases. Has a preference for oxidized purines, such as 7,8-dihydro-8-oxoguanine (8-oxoG). Has AP (apurinic/apyrimidinic) lyase activity and introduces nicks in the DNA strand. Cleaves the DNA backbone by beta-delta elimination to generate a single-strand break at the site of the removed base with both 3'- and 5'-phosphates. This chain is Formamidopyrimidine-DNA glycosylase, found in Erythrobacter litoralis (strain HTCC2594).